The sequence spans 176 residues: Shikimate kinase (176 aa).

10–15 serves as a coordination point for ATP; sequence TSGKSS. Residue Ser-14 coordinates Mg(2+). Residues Asp-32, Gly-81, and Arg-138 each coordinate substrate.

It belongs to the shikimate kinase family. Monomer. Mg(2+) serves as cofactor.

Its subcellular location is the cytoplasm. The enzyme catalyses shikimate + ATP = 3-phosphoshikimate + ADP + H(+). Its pathway is metabolic intermediate biosynthesis; chorismate biosynthesis; chorismate from D-erythrose 4-phosphate and phosphoenolpyruvate: step 5/7. Catalyzes the specific phosphorylation of the 3-hydroxyl group of shikimic acid using ATP as a cosubstrate. The chain is Shikimate kinase from Chlamydia pneumoniae (Chlamydophila pneumoniae).